Reading from the N-terminus, the 374-residue chain is Mannitol-1-phosphate 5-dehydrogenase (374 aa).

Ala3–Gly14 contributes to the NAD(+) binding site.

The protein belongs to the mannitol dehydrogenase family.

It catalyses the reaction D-mannitol 1-phosphate + NAD(+) = beta-D-fructose 6-phosphate + NADH + H(+). This Halalkalibacterium halodurans (strain ATCC BAA-125 / DSM 18197 / FERM 7344 / JCM 9153 / C-125) (Bacillus halodurans) protein is Mannitol-1-phosphate 5-dehydrogenase.